The primary structure comprises 511 residues: Glucose-6-phosphate 1-dehydrogenase, cytoplasmic isoform (511 aa).

NADP(+) contacts are provided by residues 36–43 (GASGDLAK), arginine 71, tyrosine 151, and lysine 178. Residues lysine 178, 208-212 (HYLGK), glutamate 246, and aspartate 265 each bind D-glucose 6-phosphate. Histidine 270 functions as the Proton acceptor in the catalytic mechanism. Lysine 353 contacts NADP(+). Lysine 356 and arginine 361 together coordinate D-glucose 6-phosphate. Lysine 362, arginine 366, and arginine 390 together coordinate NADP(+). Glutamine 392 is a D-glucose 6-phosphate binding site. Residues 398–400 (YMK), 418–420 (DLS), arginine 484, and tryptophan 506 each bind NADP(+).

It belongs to the glucose-6-phosphate dehydrogenase family. Homotetramer. Found in tubers, stolons, roots, and flower buds.

It is found in the cytoplasm. It catalyses the reaction D-glucose 6-phosphate + NADP(+) = 6-phospho-D-glucono-1,5-lactone + NADPH + H(+). It participates in carbohydrate degradation; pentose phosphate pathway; D-ribulose 5-phosphate from D-glucose 6-phosphate (oxidative stage): step 1/3. With respect to regulation, regulated by metabolites. In terms of biological role, catalyzes the rate-limiting step of the oxidative pentose-phosphate pathway, which represents a route for the dissimilation of carbohydrates besides glycolysis. The main function of this enzyme is to generate NADPH for reductive biosyntheses. This Solanum tuberosum (Potato) protein is Glucose-6-phosphate 1-dehydrogenase, cytoplasmic isoform (G6PDH).